We begin with the raw amino-acid sequence, 201 residues long: MKGKLITLEGIDGSGKSTITRFLNSHPAFANAVFTKEPTTSWIGDAVYKAIQSDTDELAELMLFTADHADHISTLIRPAIEEGKIVISDRYSDSRYAYQGVTLKERMEEPMEWIQMIHRGWTIIPDLTLLFDIDPAVAVQRCGKRGEQTKFEKTDLLKGVRENYLKLAEKEPERFVVIDTDRDLKEIEKDVLQAITSIIES.

An ATP-binding site is contributed by 10–17; it reads GIDGSGKS.

The protein belongs to the thymidylate kinase family.

The enzyme catalyses dTMP + ATP = dTDP + ADP. This Methanococcoides burtonii (strain DSM 6242 / NBRC 107633 / OCM 468 / ACE-M) protein is Probable thymidylate kinase.